Reading from the N-terminus, the 147-residue chain is uncharacterized protein (147 aa).

Residues 71–91 (IDILAFVAGTVGVGSLVLLQF) traverse the membrane as a helical segment.

Its subcellular location is the virion. It is found in the host membrane. This is an uncharacterized protein from Acanthamoeba polyphaga mimivirus (APMV).